A 225-amino-acid chain; its full sequence is AA9 family lytic polysaccharide monooxygenase A (225 aa).

The N-terminal stretch at 1-17 (MLTTTFALLTAALGVSA) is a signal peptide. Residues His-18 and His-85 each coordinate Cu(2+). 2 disulfides stabilise this stretch: Cys-55–Cys-173 and Cys-143–Cys-225. O2-binding residues include His-159 and Gln-168. Tyr-170 contacts Cu(2+).

The protein belongs to the polysaccharide monooxygenase AA9 family. Requires Cu(2+) as cofactor.

The protein resides in the secreted. The catalysed reaction is [(1-&gt;4)-beta-D-glucosyl]n+m + reduced acceptor + O2 = 4-dehydro-beta-D-glucosyl-[(1-&gt;4)-beta-D-glucosyl]n-1 + [(1-&gt;4)-beta-D-glucosyl]m + acceptor + H2O.. Its activity is regulated as follows. Is able to utilize various natural phenolic compounds as reducing agents. Most of these reducing agents are present in plants, either free or as lignin building blocks, such as sinapic acid, or as flavonoids such as catechin and dopamine. Phenolic compounds with 1,2-benzenediol and 1,2,3-benzenetriol moieties yield the highest release of oxidized and non-oxidized glucooligosaccharides from cellulose compared to monophenols or sulfur-containing compounds. Functionally, lytic polysaccharide monooxygenase (LPMO) that depolymerizes crystalline and amorphous polysaccharides via the oxidation of scissile alpha- or beta-(1-4)-glycosidic bonds, yielding C1 or C4 oxidation products. Catalysis by LPMOs requires the reduction of the active-site copper from Cu(II) to Cu(I) by a reducing agent and H(2)O(2) or O(2) as a cosubstrate. Shows oxidative cleavage of xylan in addition to cellulose. Shows a strong synergistic effect with endoglucanase I (EGI) with a 16-fold higher release of detected oligosaccharides. This Thermothelomyces thermophilus (strain ATCC 42464 / BCRC 31852 / DSM 1799) (Sporotrichum thermophile) protein is AA9 family lytic polysaccharide monooxygenase A.